The following is a 269-amino-acid chain: Thiazole synthase (269 aa).

The Schiff-base intermediate with DXP role is filled by lysine 109. Residues glycine 170, 196-197 (AG), and 218-219 (NT) contribute to the 1-deoxy-D-xylulose 5-phosphate site.

It belongs to the ThiG family. Homotetramer. Forms heterodimers with either ThiH or ThiS.

The protein resides in the plastid. It localises to the chloroplast. The enzyme catalyses [ThiS sulfur-carrier protein]-C-terminal-Gly-aminoethanethioate + 2-iminoacetate + 1-deoxy-D-xylulose 5-phosphate = [ThiS sulfur-carrier protein]-C-terminal Gly-Gly + 2-[(2R,5Z)-2-carboxy-4-methylthiazol-5(2H)-ylidene]ethyl phosphate + 2 H2O + H(+). Its pathway is cofactor biosynthesis; thiamine diphosphate biosynthesis. Catalyzes the rearrangement of 1-deoxy-D-xylulose 5-phosphate (DXP) to produce the thiazole phosphate moiety of thiamine. Sulfur is provided by the thiocarboxylate moiety of the carrier protein ThiS. In vitro, sulfur can be provided by H(2)S. The protein is Thiazole synthase of Phaeodactylum tricornutum (strain CCAP 1055/1).